The sequence spans 282 residues: 4-hydroxy-3-methylbut-2-enyl diphosphate reductase (282 aa).

A [4Fe-4S] cluster-binding site is contributed by Cys-12. His-40 and His-72 together coordinate (2E)-4-hydroxy-3-methylbut-2-enyl diphosphate. 2 residues coordinate dimethylallyl diphosphate: His-40 and His-72. Isopentenyl diphosphate-binding residues include His-40 and His-72. Cys-94 is a [4Fe-4S] cluster binding site. Residue His-122 coordinates (2E)-4-hydroxy-3-methylbut-2-enyl diphosphate. A dimethylallyl diphosphate-binding site is contributed by His-122. His-122 serves as a coordination point for isopentenyl diphosphate. Glu-124 serves as the catalytic Proton donor. Residue Thr-160 coordinates (2E)-4-hydroxy-3-methylbut-2-enyl diphosphate. Cys-188 contacts [4Fe-4S] cluster. The (2E)-4-hydroxy-3-methylbut-2-enyl diphosphate site is built by Ser-216, Asn-218, and Ser-260. Dimethylallyl diphosphate is bound by residues Ser-216, Asn-218, and Ser-260. Positions 216, 218, and 260 each coordinate isopentenyl diphosphate.

This sequence belongs to the IspH family. Requires [4Fe-4S] cluster as cofactor.

The enzyme catalyses isopentenyl diphosphate + 2 oxidized [2Fe-2S]-[ferredoxin] + H2O = (2E)-4-hydroxy-3-methylbut-2-enyl diphosphate + 2 reduced [2Fe-2S]-[ferredoxin] + 2 H(+). It carries out the reaction dimethylallyl diphosphate + 2 oxidized [2Fe-2S]-[ferredoxin] + H2O = (2E)-4-hydroxy-3-methylbut-2-enyl diphosphate + 2 reduced [2Fe-2S]-[ferredoxin] + 2 H(+). Its pathway is isoprenoid biosynthesis; dimethylallyl diphosphate biosynthesis; dimethylallyl diphosphate from (2E)-4-hydroxy-3-methylbutenyl diphosphate: step 1/1. It participates in isoprenoid biosynthesis; isopentenyl diphosphate biosynthesis via DXP pathway; isopentenyl diphosphate from 1-deoxy-D-xylulose 5-phosphate: step 6/6. Functionally, catalyzes the conversion of 1-hydroxy-2-methyl-2-(E)-butenyl 4-diphosphate (HMBPP) into a mixture of isopentenyl diphosphate (IPP) and dimethylallyl diphosphate (DMAPP). Acts in the terminal step of the DOXP/MEP pathway for isoprenoid precursor biosynthesis. The sequence is that of 4-hydroxy-3-methylbut-2-enyl diphosphate reductase from Geobacter sulfurreducens (strain ATCC 51573 / DSM 12127 / PCA).